Here is a 94-residue protein sequence, read N- to C-terminus: Small ribosomal subunit protein bS18 (94 aa).

This sequence belongs to the bacterial ribosomal protein bS18 family. Part of the 30S ribosomal subunit. Forms a tight heterodimer with protein bS6.

Functionally, binds as a heterodimer with protein bS6 to the central domain of the 16S rRNA, where it helps stabilize the platform of the 30S subunit. In Acetivibrio thermocellus (strain ATCC 27405 / DSM 1237 / JCM 9322 / NBRC 103400 / NCIMB 10682 / NRRL B-4536 / VPI 7372) (Clostridium thermocellum), this protein is Small ribosomal subunit protein bS18.